Here is a 172-residue protein sequence, read N- to C-terminus: Major exported protein (172 aa).

Belongs to the hcp1 family.

Its subcellular location is the secreted. This chain is Major exported protein (hcpA), found in Pseudomonas aeruginosa (strain ATCC 15692 / DSM 22644 / CIP 104116 / JCM 14847 / LMG 12228 / 1C / PRS 101 / PAO1).